The sequence spans 158 residues: Protein Smg homolog (158 aa).

The protein belongs to the Smg family.

The chain is Protein Smg homolog from Coxiella burnetii (strain RSA 331 / Henzerling II).